Here is a 269-residue protein sequence, read N- to C-terminus: 4-hydroxy-tetrahydrodipicolinate reductase (269 aa).

Residue 11–16 coordinates NAD(+); that stretch reads GPIGRM. Position 39 (Lys39) interacts with NADP(+). Residues 101–103 and 125–128 each bind NAD(+); these read GTT and ASNF. The active-site Proton donor/acceptor is His158. His159 lines the (S)-2,3,4,5-tetrahydrodipicolinate pocket. The Proton donor role is filled by Lys162. Residue 168 to 169 participates in (S)-2,3,4,5-tetrahydrodipicolinate binding; it reads GT.

This sequence belongs to the DapB family. Homotetramer.

It is found in the cytoplasm. It carries out the reaction (S)-2,3,4,5-tetrahydrodipicolinate + NAD(+) + H2O = (2S,4S)-4-hydroxy-2,3,4,5-tetrahydrodipicolinate + NADH + H(+). It catalyses the reaction (S)-2,3,4,5-tetrahydrodipicolinate + NADP(+) + H2O = (2S,4S)-4-hydroxy-2,3,4,5-tetrahydrodipicolinate + NADPH + H(+). The protein operates within amino-acid biosynthesis; L-lysine biosynthesis via DAP pathway; (S)-tetrahydrodipicolinate from L-aspartate: step 4/4. Its function is as follows. Catalyzes the conversion of 4-hydroxy-tetrahydrodipicolinate (HTPA) to tetrahydrodipicolinate. This is 4-hydroxy-tetrahydrodipicolinate reductase from Buchnera aphidicola subsp. Acyrthosiphon pisum (strain APS) (Acyrthosiphon pisum symbiotic bacterium).